Consider the following 95-residue polypeptide: Acylphosphatase 2 (95 aa).

The 88-residue stretch at 6 to 93 (RVIVTVQGRV…PLPPGFEVRP (88 aa)) folds into the Acylphosphatase-like domain. Residues arginine 21 and asparagine 39 contribute to the active site.

Belongs to the acylphosphatase family.

The enzyme catalyses an acyl phosphate + H2O = a carboxylate + phosphate + H(+). This is Acylphosphatase 2 (acyP2) from Ralstonia nicotianae (strain ATCC BAA-1114 / GMI1000) (Ralstonia solanacearum).